The sequence spans 156 residues: 6,7-dimethyl-8-ribityllumazine synthase (156 aa).

Residues phenylalanine 23, 57–59 (AFE), and 81–83 (AII) contribute to the 5-amino-6-(D-ribitylamino)uracil site. Residue 86 to 87 (ST) participates in (2S)-2-hydroxy-3-oxobutyl phosphate binding. Histidine 89 serves as the catalytic Proton donor. Position 114 (phenylalanine 114) interacts with 5-amino-6-(D-ribitylamino)uracil. Arginine 128 lines the (2S)-2-hydroxy-3-oxobutyl phosphate pocket.

This sequence belongs to the DMRL synthase family.

The catalysed reaction is (2S)-2-hydroxy-3-oxobutyl phosphate + 5-amino-6-(D-ribitylamino)uracil = 6,7-dimethyl-8-(1-D-ribityl)lumazine + phosphate + 2 H2O + H(+). Its pathway is cofactor biosynthesis; riboflavin biosynthesis; riboflavin from 2-hydroxy-3-oxobutyl phosphate and 5-amino-6-(D-ribitylamino)uracil: step 1/2. Its function is as follows. Catalyzes the formation of 6,7-dimethyl-8-ribityllumazine by condensation of 5-amino-6-(D-ribitylamino)uracil with 3,4-dihydroxy-2-butanone 4-phosphate. This is the penultimate step in the biosynthesis of riboflavin. The protein is 6,7-dimethyl-8-ribityllumazine synthase of Wolinella succinogenes (strain ATCC 29543 / DSM 1740 / CCUG 13145 / JCM 31913 / LMG 7466 / NCTC 11488 / FDC 602W) (Vibrio succinogenes).